The following is a 287-amino-acid chain: Intermediate filament family orphan 2 (287 aa).

One can recognise an IF rod domain in the interval 1-254 (MNLQTMVDTL…RLIKGSADRN (254 aa)). Positions 248–287 (KGSADRNSPSPSSVASSDSGSTDEIQDDLEREADVEPMVS) are disordered. Low complexity predominate over residues 255–267 (SPSPSSVASSDSG). Acidic residues predominate over residues 271–287 (EIQDDLEREADVEPMVS).

The protein belongs to the intermediate filament family.

In Rattus norvegicus (Rat), this protein is Intermediate filament family orphan 2 (Iffo2).